The chain runs to 239 residues: Yolk ferritin (239 aa).

Residues 1-18 form the signal peptide; the sequence is MNSVLFLTLAVCSSLAYG. In terms of domain architecture, Ferritin-like diiron spans 27 to 217; it reads QNYKENINQL…HAITRLRSFE (191 aa). Residues Glu44 and Glu79 each coordinate Fe cation. Positions 105–146 are insertion; not present in other ferritins; sequence KDACETVMKFVTSDTSGLEEFRDRRMCICGFVATKTINDNCG. Fe cation contacts are provided by Glu165 and Gln199.

Belongs to the ferritin family. As to quaternary structure, oligomer of 12 or 24 subunits. The functional molecule is roughly spherical and contains a central cavity into which the polymeric ferric iron core is deposited. In terms of tissue distribution, midgut gland and bloodstream.

The protein localises to the secreted. It carries out the reaction 4 Fe(2+) + O2 + 4 H(+) = 4 Fe(3+) + 2 H2O. Its function is as follows. Stores iron in a soluble, non-toxic, readily available form. Important for iron homeostasis. Has ferroxidase activity. Iron is taken up in the ferrous form and deposited as ferric hydroxides after oxidation. The protein is Yolk ferritin of Lymnaea stagnalis (Great pond snail).